Consider the following 1054-residue polypeptide: DNA-directed RNA polymerase subunit beta' (1054 aa).

Residues Asp383, Asp385, and Asp387 each contribute to the Mg(2+) site. Zn(2+) contacts are provided by Cys752, Cys826, Cys833, and Cys836.

This sequence belongs to the RNA polymerase beta' chain family. As to quaternary structure, the RNAP catalytic core consists of 2 alpha, 1 beta, 1 beta' and 1 omega subunit. When a sigma factor is associated with the core the holoenzyme is formed, which can initiate transcription. The cofactor is Mg(2+). Zn(2+) is required as a cofactor.

It carries out the reaction RNA(n) + a ribonucleoside 5'-triphosphate = RNA(n+1) + diphosphate. Functionally, DNA-dependent RNA polymerase catalyzes the transcription of DNA into RNA using the four ribonucleoside triphosphates as substrates. This is DNA-directed RNA polymerase subunit beta' from Weissella paramesenteroides (Leuconostoc paramesenteroides).